Here is a 483-residue protein sequence, read N- to C-terminus: MTIFEKSVTGRTGYTLPEEKKDEIRPSDYIPEHLLRKELPGLPECSEIDVVRHYTELTRKNYSVDNGFYPLGSCTMKYNPKLNEKIAALEGFSLLHPYEPIEKVQGALEVMYRLQTLLSEITGMDAFTLQPAAGAHGELTGMLIVKKYFEVKGENQRTKVIVPDSAHGTNPASASMAGFQVVEIKSNDNGIIDLDNLEAALDESVAAIMLTNPNTLGLFEKDIIKIAEMAHKNGTLLYYDGANLNAIMGKVRPGDMGFDIVHLNLHKTFSTPHGMGGPGSGPVGVKGHLKEFLPIPVVDLTDEGYILKTDLSHSIGRIRSFYGNFGVVVKALAYILMLGKDGLTYASEIAVLNANYLRTRLSELIPTAYPGLCKHEFVLDGTKLVKEYGIKTLDLAKRMLDYGVHPPTIYFPLIVHEALMIEPTETENKDNLDHFVEVVKKILEEAKKDPEFVKNAPYNTPIKRLDEVTASRKPKVRWIPKEQ.

K267 bears the N6-(pyridoxal phosphate)lysine mark.

This sequence belongs to the GcvP family. C-terminal subunit subfamily. The glycine cleavage system is composed of four proteins: P, T, L and H. In this organism, the P 'protein' is a heterodimer of two subunits. It depends on pyridoxal 5'-phosphate as a cofactor.

The enzyme catalyses N(6)-[(R)-lipoyl]-L-lysyl-[glycine-cleavage complex H protein] + glycine + H(+) = N(6)-[(R)-S(8)-aminomethyldihydrolipoyl]-L-lysyl-[glycine-cleavage complex H protein] + CO2. Its function is as follows. The glycine cleavage system catalyzes the degradation of glycine. The P protein binds the alpha-amino group of glycine through its pyridoxal phosphate cofactor; CO(2) is released and the remaining methylamine moiety is then transferred to the lipoamide cofactor of the H protein. This Kosmotoga olearia (strain ATCC BAA-1733 / DSM 21960 / TBF 19.5.1) protein is Probable glycine dehydrogenase (decarboxylating) subunit 2.